Here is a 328-residue protein sequence, read N- to C-terminus: Malate dehydrogenase 2 (328 aa).

Residue 12–18 (GAAGQIA) coordinates NAD(+). Substrate contacts are provided by Arg-93 and Arg-99. NAD(+) contacts are provided by residues Asn-106, Gln-113, and 130–132 (VGN). 2 residues coordinate substrate: Asn-132 and Arg-163. The active-site Proton acceptor is the His-188.

It belongs to the LDH/MDH superfamily. MDH type 2 family.

It catalyses the reaction (S)-malate + NAD(+) = oxaloacetate + NADH + H(+). Its function is as follows. Catalyzes the reversible oxidation of malate to oxaloacetate. This chain is Malate dehydrogenase 2, found in Burkholderia vietnamiensis (strain G4 / LMG 22486) (Burkholderia cepacia (strain R1808)).